We begin with the raw amino-acid sequence, 322 residues long: Phosphatidylserine decarboxylase proenzyme (322 aa).

Residues aspartate 90, histidine 147, and serine 254 each act as charge relay system; for autoendoproteolytic cleavage activity in the active site. The active-site Schiff-base intermediate with substrate; via pyruvic acid; for decarboxylase activity is serine 254. Serine 254 is modified (pyruvic acid (Ser); by autocatalysis). Positions 290 to 322 (FVTPDSEPAPLPAEEIEAEHDASPLVDDKKDQV) are disordered. Basic and acidic residues predominate over residues 308–322 (EHDASPLVDDKKDQV).

This sequence belongs to the phosphatidylserine decarboxylase family. PSD-B subfamily. Prokaryotic type I sub-subfamily. As to quaternary structure, heterodimer of a large membrane-associated beta subunit and a small pyruvoyl-containing alpha subunit. It depends on pyruvate as a cofactor. Is synthesized initially as an inactive proenzyme. Formation of the active enzyme involves a self-maturation process in which the active site pyruvoyl group is generated from an internal serine residue via an autocatalytic post-translational modification. Two non-identical subunits are generated from the proenzyme in this reaction, and the pyruvate is formed at the N-terminus of the alpha chain, which is derived from the carboxyl end of the proenzyme. The autoendoproteolytic cleavage occurs by a canonical serine protease mechanism, in which the side chain hydroxyl group of the serine supplies its oxygen atom to form the C-terminus of the beta chain, while the remainder of the serine residue undergoes an oxidative deamination to produce ammonia and the pyruvoyl prosthetic group on the alpha chain. During this reaction, the Ser that is part of the protease active site of the proenzyme becomes the pyruvoyl prosthetic group, which constitutes an essential element of the active site of the mature decarboxylase.

It localises to the cell membrane. The catalysed reaction is a 1,2-diacyl-sn-glycero-3-phospho-L-serine + H(+) = a 1,2-diacyl-sn-glycero-3-phosphoethanolamine + CO2. It participates in phospholipid metabolism; phosphatidylethanolamine biosynthesis; phosphatidylethanolamine from CDP-diacylglycerol: step 2/2. In terms of biological role, catalyzes the formation of phosphatidylethanolamine (PtdEtn) from phosphatidylserine (PtdSer). In Escherichia fergusonii (strain ATCC 35469 / DSM 13698 / CCUG 18766 / IAM 14443 / JCM 21226 / LMG 7866 / NBRC 102419 / NCTC 12128 / CDC 0568-73), this protein is Phosphatidylserine decarboxylase proenzyme.